The sequence spans 480 residues: MAKATEKRVKRAKKEESGSESEDNDAIAQEILDTTKSDNEEEEPKKSSKNYTSVEVDESEEQTKTFKDLGVIDSICETCEELKFTKPTPIQAQSIPYALEGRDIIGLAQTGSGKTAAFAIPVLQSLYENPQPLYCVVLAPTRELAYQISETFEALGSAMGLRTAVVVGGMNMMTQAVALSKKPHVIVATPGRLVDHLENTKGFSLRTLKFLVMDEADRLLDMEFGPSLDKILKVIPRQRNTYLFSATMTSKVEKLQRASLVDPVRVAVSTKYQTADNLLQYMVFCPFKHKDTHLVYLVSENAGNSMIIFARTKSDTQRISLLLRNLGYGAIPLHGDLSQTARLGALNKFKSGSRNILIATDVASRGLDIPAVDLVINYDIPSDSKSYIHRVGRTARAGRAGKSVALVSQYDLELYLRIEGALGKKLDSYPLESEAVMLFSERVAEASRAAIQEMKGEDGTKKRSKFDKKRRRDEMDIGEQ.

Basic and acidic residues-rich tracts occupy residues 1–17 (MAKA…KEES) and 33–46 (DTTK…EPKK). The tract at residues 1-63 (MAKATEKRVK…VEVDESEEQT (63 aa)) is disordered. A Q motif motif is present at residues 64–92 (KTFKDLGVIDSICETCEELKFTKPTPIQA). A Helicase ATP-binding domain is found at 95–266 (IPYALEGRDI…RASLVDPVRV (172 aa)). 108–115 (AQTGSGKT) contacts ATP. Positions 214-217 (DEAD) match the DEAD box motif. Residues 277 to 437 (NLLQYMVFCP…SYPLESEAVM (161 aa)) enclose the Helicase C-terminal domain. A disordered region spans residues 450–480 (AIQEMKGEDGTKKRSKFDKKRRRDEMDIGEQ). Residues 462–471 (KRSKFDKKRR) are compositionally biased toward basic residues.

The protein belongs to the DEAD box helicase family. DDX47/RRP3 subfamily. In terms of assembly, interacts with the SSU processome.

It is found in the nucleus. The enzyme catalyses ATP + H2O = ADP + phosphate + H(+). Functionally, ATP-dependent rRNA helicase required for pre-ribosomal RNA processing. Involved in the maturation of the 35S-pre-rRNA and to its cleavage to mature 18S rRNA. In Yarrowia lipolytica (strain CLIB 122 / E 150) (Yeast), this protein is ATP-dependent rRNA helicase RRP3.